A 712-amino-acid chain; its full sequence is Potassium transporter 1 (712 aa).

At 1–19 (MNQSPSLIEQGISQQHLKT) the chain is on the cytoplasmic side. A helical membrane pass occupies residues 20–40 (LSCANVLTLAYQSLGVIYGDL). The Extracellular portion of the chain corresponds to 41-67 (STSPLYVYKTTFSGKLSLHEDDEEIFG). A helical transmembrane segment spans residues 68-88 (VFSFIFWTFTLIALFKYVFIV). Residues 89-154 (LSADDNGEGG…FFEKHPKSQK (66 aa)) lie on the Cytoplasmic side of the membrane. Residues 155–175 (CLLLFVLLGTCMAIGDSVLTP) traverse the membrane as a helical segment. Topologically, residues 176–189 (TISVLSAVSGVKLK) are extracellular. A helical transmembrane segment spans residues 190-210 (IPNLHENYVVIIACIILVAIF). The Cytoplasmic portion of the chain corresponds to 211–219 (SVQRYGTHR). A helical membrane pass occupies residues 220-240 (VAFIFAPISTAWLLSISSIGV). Residues 241-267 (YNTIKWNPRIVSALSPVYMYKFLRSTG) are Extracellular-facing. Residues 268 to 288 (VEGWVSLGGVVLSITGVETMF) traverse the membrane as a helical segment. Residues 289–300 (ADLGHFSSLSIK) are Cytoplasmic-facing. The chain crosses the membrane as a helical span at residues 301–321 (VAFSFFVYPCLILAYMGEAAF). Residues 322 to 340 (LSKHHEDIQQSFYKAIPEP) are Extracellular-facing. Residues 341-361 (VFWPVFIVATFAAVVGSQAVI) traverse the membrane as a helical segment. Topologically, residues 362-392 (SATFSIISQCCALDCFPRVKIIHTSSKIHGQ) are cytoplasmic. Residues 393 to 413 (IYIPEVNWMLMCLCLAVTIGL) form a helical membrane-spanning segment. At 414–424 (RDTNMMGHAYG) the chain is on the extracellular side. A helical membrane pass occupies residues 425–445 (LAVTSVMLVTTCLMTLVMTIV). At 446–449 (WKQR) the chain is on the cytoplasmic side. The helical transmembrane segment at 450 to 470 (IITVLAFVVFFGSIELLYFSS) threads the bilayer. Topologically, residues 471–474 (CVYK) are extracellular. The helical transmembrane segment at 475–495 (VPEGGWIPILLSLTFMAVMYI) threads the bilayer. At 496 to 712 (WNYGTTKKHE…LLEVGMVYYV (217 aa)) the chain is on the cytoplasmic side.

The protein belongs to the HAK/KUP transporter (TC 2.A.72.3) family. As to expression, detected in the whole mature plant but preferentially expressed in roots and stems, and in potassium-starved plants.

It is found in the cell membrane. In terms of biological role, high-affinity potassium transporter that could play a major role in the uptake of potassium from the rhizosphere. May act as a low-affinity potassium transporter under high potassium concentrations. Could also transport rubidium. This chain is Potassium transporter 1 (POT1), found in Arabidopsis thaliana (Mouse-ear cress).